We begin with the raw amino-acid sequence, 67 residues long: Large ribosomal subunit protein uL29 (67 aa).

It belongs to the universal ribosomal protein uL29 family.

The protein is Large ribosomal subunit protein uL29 of Exiguobacterium sp. (strain ATCC BAA-1283 / AT1b).